A 481-amino-acid chain; its full sequence is Probable glycine dehydrogenase (decarboxylating) subunit 2 (481 aa).

The interval 1–26 (MVIFEKTRGKNSPSVMPSKKGDVSNI) is disordered. N6-(pyridoxal phosphate)lysine is present on Lys263.

Belongs to the GcvP family. C-terminal subunit subfamily. As to quaternary structure, the glycine cleavage system is composed of four proteins: P, T, L and H. In this organism, the P 'protein' is a heterodimer of two subunits. Pyridoxal 5'-phosphate is required as a cofactor.

The catalysed reaction is N(6)-[(R)-lipoyl]-L-lysyl-[glycine-cleavage complex H protein] + glycine + H(+) = N(6)-[(R)-S(8)-aminomethyldihydrolipoyl]-L-lysyl-[glycine-cleavage complex H protein] + CO2. Functionally, the glycine cleavage system catalyzes the degradation of glycine. The P protein binds the alpha-amino group of glycine through its pyridoxal phosphate cofactor; CO(2) is released and the remaining methylamine moiety is then transferred to the lipoamide cofactor of the H protein. This Francisella tularensis subsp. mediasiatica (strain FSC147) protein is Probable glycine dehydrogenase (decarboxylating) subunit 2.